The chain runs to 555 residues: MTTKKMLVTCALPYANGSLHIGHMLEHIQADIWVRYQRMQGNCVYFICADDAHGTAIMLKSQQLNIAPEQMIAQIRQEHQRDCYKFGISYDNYYSTHSDETRELLHDIYSRLNTRGFIKSKFISQLYDSKKNMFLPDRFVKGICPKCKKDDQYGDNCAACGTIYTSLELINPKSVISGTSPIIRKSEHLFFDLPAFTDTLRTWIRSGSIQKEVANKVEEWFKLGLKKWDISRDAPYFGFKIPNSSEKYFYVWMDAPVGYMGTFKNLCKKNKNISFNDFWGSNSKTDLYHFIGKDIIYFHCLFWPAVLSGSQFRKPTNIFVHGHVTLNGSKISKSKGTCINVSTYLSCLNPDYLRYYYATKLSSHANDIDLNLSDFITRVNSDIINKILNLASRNSGFIHQYYNGHLSNTLTHPLIYNMFIESRHYIGKLFQKREFNYAMREIMKLADEANRYIDKHAPWHIAKKIDRRQEALSIYSMGIQLFRVLMIYLKPVLPKLANYSECFLNTRLTWGSLSAPLSNHRINKFKIIFSRIHPDQIASMTNKSQLHERLTDNNV.

The 'HIGH' region motif lies at 13–23; it reads PYANGSLHIGH. Residues cysteine 144, cysteine 147, cysteine 157, and cysteine 160 each coordinate Zn(2+). The short motif at 330-334 is the 'KMSKS' region element; that stretch reads KISKS. ATP is bound at residue lysine 333.

The protein belongs to the class-I aminoacyl-tRNA synthetase family. MetG type 1 subfamily. As to quaternary structure, monomer. Requires Zn(2+) as cofactor.

The protein resides in the cytoplasm. It catalyses the reaction tRNA(Met) + L-methionine + ATP = L-methionyl-tRNA(Met) + AMP + diphosphate. Functionally, is required not only for elongation of protein synthesis but also for the initiation of all mRNA translation through initiator tRNA(fMet) aminoacylation. This Blochmanniella pennsylvanica (strain BPEN) protein is Methionine--tRNA ligase.